A 113-amino-acid polypeptide reads, in one-letter code: Putative pterin-4-alpha-carbinolamine dehydratase (113 aa).

Belongs to the pterin-4-alpha-carbinolamine dehydratase family.

It carries out the reaction (4aS,6R)-4a-hydroxy-L-erythro-5,6,7,8-tetrahydrobiopterin = (6R)-L-erythro-6,7-dihydrobiopterin + H2O. This is Putative pterin-4-alpha-carbinolamine dehydratase from Legionella pneumophila (strain Paris).